The primary structure comprises 230 residues: Sugar fermentation stimulation protein homolog (230 aa).

The protein belongs to the SfsA family.

The chain is Sugar fermentation stimulation protein homolog from Clostridium perfringens (strain SM101 / Type A).